A 385-amino-acid polypeptide reads, in one-letter code: Probable tRNA sulfurtransferase (385 aa).

The region spanning 57–160 is the THUMP domain; the sequence is DGVIERVKKV…RGNAYVFTDK (104 aa). Residues 180–181, 205–206, R262, G284, and Q293 each bind ATP; these read ML and YY.

It belongs to the ThiI family.

The protein localises to the cytoplasm. It catalyses the reaction [ThiI sulfur-carrier protein]-S-sulfanyl-L-cysteine + a uridine in tRNA + 2 reduced [2Fe-2S]-[ferredoxin] + ATP + H(+) = [ThiI sulfur-carrier protein]-L-cysteine + a 4-thiouridine in tRNA + 2 oxidized [2Fe-2S]-[ferredoxin] + AMP + diphosphate. It carries out the reaction [ThiS sulfur-carrier protein]-C-terminal Gly-Gly-AMP + S-sulfanyl-L-cysteinyl-[cysteine desulfurase] + AH2 = [ThiS sulfur-carrier protein]-C-terminal-Gly-aminoethanethioate + L-cysteinyl-[cysteine desulfurase] + A + AMP + 2 H(+). It functions in the pathway cofactor biosynthesis; thiamine diphosphate biosynthesis. Its function is as follows. Catalyzes the ATP-dependent transfer of a sulfur to tRNA to produce 4-thiouridine in position 8 of tRNAs, which functions as a near-UV photosensor. Also catalyzes the transfer of sulfur to the sulfur carrier protein ThiS, forming ThiS-thiocarboxylate. This is a step in the synthesis of thiazole, in the thiamine biosynthesis pathway. The sulfur is donated as persulfide by IscS. The protein is Probable tRNA sulfurtransferase of Clostridium perfringens (strain 13 / Type A).